The following is a 330-amino-acid chain: Phospholipase C (330 aa).

The N-terminal stretch at 1–34 is a signal peptide; the sequence is MVKKTKSNSLKKVATLALANLLLVGALTDNSAKA. A disulfide bridge links C155 with C191.

The protein belongs to the neutral sphingomyelinase family. As to quaternary structure, monomer.

Its subcellular location is the secreted. It catalyses the reaction a 1,2-diacyl-sn-glycero-3-phosphocholine + H2O = phosphocholine + a 1,2-diacyl-sn-glycerol + H(+). Its function is as follows. Bacterial hemolysins are exotoxins that attack blood cell membranes and cause cell rupture. Beta-hemolysin is a phospholipase C with specific activity toward sphingomyelins. Has a high specificity for sphingomyelin, hydrolyzes lysophosphatidylcholine at a much lower rate, but has no activity towards phosphatidylcholine, phosphatidylethanolamine, or phosphatidylserine. The sequence is that of Phospholipase C (hlb) from Staphylococcus aureus (strain NCTC 8325 / PS 47).